The chain runs to 251 residues: Cell division protein ZapD (251 aa).

The protein belongs to the ZapD family. In terms of assembly, interacts with FtsZ.

The protein resides in the cytoplasm. Cell division factor that enhances FtsZ-ring assembly. Directly interacts with FtsZ and promotes bundling of FtsZ protofilaments, with a reduction in FtsZ GTPase activity. This is Cell division protein ZapD from Paraburkholderia phytofirmans (strain DSM 17436 / LMG 22146 / PsJN) (Burkholderia phytofirmans).